The chain runs to 638 residues: Leucine-rich repeat-containing protein 63 (638 aa).

Disordered stretches follow at residues 220–241 (VPST…PSAA) and 306–325 (TTAA…TVQR). 6 LRR repeats span residues 389–412 (AFQL…ILYL), 413–435 (QNLQ…IHLL), 437–458 (YLRI…LFCL), 460–481 (YLEE…IQKL), 482–504 (RSLE…ILKL), and 532–556 (LTQI…VRKS).

This Mus musculus (Mouse) protein is Leucine-rich repeat-containing protein 63.